A 186-amino-acid chain; its full sequence is MSDYMINSMQFLYLVASYLFGNILTAYIVTKWRHNVDIRDEGSGNPGARNMGRVYGKGYFVATFLGDAIKGAIVVSIAKYLFEDSTFVMLTLLAVIIGHIYPVLFKGKGGKGISTFIGGLIAFDYLIALTLVAVFIIFYLIFKGFTKPGLITIACLPLCMILYSYSIVTTILSALIIVLILYVNRE.

A run of 5 helical transmembrane segments spans residues Met-9–Val-29, Gly-58–Ala-78, Ser-85–Phe-105, Ile-121–Ile-141, and Ile-161–Leu-181.

This sequence belongs to the PlsY family. As to quaternary structure, probably interacts with PlsX.

It is found in the cell membrane. The enzyme catalyses an acyl phosphate + sn-glycerol 3-phosphate = a 1-acyl-sn-glycero-3-phosphate + phosphate. It participates in lipid metabolism; phospholipid metabolism. Its function is as follows. Catalyzes the transfer of an acyl group from acyl-phosphate (acyl-PO(4)) to glycerol-3-phosphate (G3P) to form lysophosphatidic acid (LPA). This enzyme utilizes acyl-phosphate as fatty acyl donor, but not acyl-CoA or acyl-ACP. The polypeptide is Glycerol-3-phosphate acyltransferase 1 (Bacillus cereus (strain ZK / E33L)).